Consider the following 43-residue polypeptide: Gene 67 protein (43 aa).

This Mycobacterium phage L5 (Mycobacteriophage L5) protein is Gene 67 protein (67).